The following is a 457-amino-acid chain: tRNA-2-methylthio-N(6)-dimethylallyladenosine synthase (457 aa).

One can recognise an MTTase N-terminal domain in the interval 3-120 (KKVYIKTFGC…LPQMIDQRRA (118 aa)). [4Fe-4S] cluster is bound by residues cysteine 12, cysteine 49, cysteine 83, cysteine 157, cysteine 161, and cysteine 164. In terms of domain architecture, Radical SAM core spans 143 to 377 (RVEGPSAFVS…QATIEENVAR (235 aa)). In terms of domain architecture, TRAM spans 380–447 (RSMVGKVERI…PHSLRGELLL (68 aa)).

This sequence belongs to the methylthiotransferase family. MiaB subfamily. As to quaternary structure, monomer. Requires [4Fe-4S] cluster as cofactor.

Its subcellular location is the cytoplasm. It carries out the reaction N(6)-dimethylallyladenosine(37) in tRNA + (sulfur carrier)-SH + AH2 + 2 S-adenosyl-L-methionine = 2-methylsulfanyl-N(6)-dimethylallyladenosine(37) in tRNA + (sulfur carrier)-H + 5'-deoxyadenosine + L-methionine + A + S-adenosyl-L-homocysteine + 2 H(+). In terms of biological role, catalyzes the methylthiolation of N6-(dimethylallyl)adenosine (i(6)A), leading to the formation of 2-methylthio-N6-(dimethylallyl)adenosine (ms(2)i(6)A) at position 37 in tRNAs that read codons beginning with uridine. The protein is tRNA-2-methylthio-N(6)-dimethylallyladenosine synthase of Burkholderia ambifaria (strain MC40-6).